The primary structure comprises 701 residues: Polyribonucleotide nucleotidyltransferase (701 aa).

Positions 487 and 493 each coordinate Mg(2+). The 60-residue stretch at 554-613 (PTMLAMKIDQDKIRDVIGKGGATIRAICEETKASIDIEDDGSIKIFGETKEAAEAAKQRV) folds into the KH domain. The S1 motif domain maps to 623-691 (GKIYVGKVER…NRGRIKLSIK (69 aa)).

The protein belongs to the polyribonucleotide nucleotidyltransferase family. Component of the RNA degradosome, which is a multiprotein complex involved in RNA processing and mRNA degradation. Mg(2+) serves as cofactor.

Its subcellular location is the cytoplasm. It catalyses the reaction RNA(n+1) + phosphate = RNA(n) + a ribonucleoside 5'-diphosphate. Its function is as follows. Involved in mRNA degradation. Catalyzes the phosphorolysis of single-stranded polyribonucleotides processively in the 3'- to 5'-direction. The chain is Polyribonucleotide nucleotidyltransferase from Stutzerimonas stutzeri (strain A1501) (Pseudomonas stutzeri).